A 441-amino-acid polypeptide reads, in one-letter code: Transforming protein p54/c-ets-1 (441 aa).

The 86-residue stretch at 51-136 folds into the PNT domain; it reads ATFSGFAKEQ…EHLEILQKEE (86 aa). The activation domain; required for transcription activation stretch occupies residues 130 to 243; it reads EILQKEEAKP…DNMCMGRASR (114 aa). Positions 304–312 are helix HI-1; it reads FKDYVRDRA. The tract at residues 323 to 330 is helix HI-2; sequence AAALAGYT. The segment at residues 335 to 415 is a DNA-binding region (ETS); the sequence is IQLWQFLLEL…AGKRYVYRFV (81 aa). A helix H4 region spans residues 418 to 422; that stretch reads LQSLL. The tract at residues 426-432 is helix H5; sequence PEELHAM.

The protein belongs to the ETS family. As to quaternary structure, binds DNA as a homodimer; homodimerization is required for transcription activation.

It is found in the nucleus. It localises to the cytoplasm. Autoinhibited by a module composed of four alpha helices (HI-1, HI-2, H4, and H5) that flank the DNA-binding ETS domain, reducing the affinity for DNA. Its function is as follows. Transcription factor. Directly controls the expression of cytokine and chemokine genes in a wide variety of different cellular contexts. This Gallus gallus (Chicken) protein is Transforming protein p54/c-ets-1 (ETS1).